The chain runs to 390 residues: Two-component response regulator ORR29 (390 aa).

One can recognise a Response regulatory domain in the interval 13-130; sequence SAMVIDEDKC…TIKNLWQYVD (118 aa). At aspartate 65 the chain carries 4-aspartylphosphate. The myb-like GARP DNA-binding region spans 169 to 226; it reads KKYYLMWTPHLQKKFLHALQILGKDASPKNIKKIMGVDNIDCRQIAAHLQKHRLRLTK. 2 disordered regions span residues 233–271 and 303–339; these read FTTDTSKDESNSRIGPAESHHVCRNASTLQPRSNTQPTE and SKHSSDPSGDEDEQVVVGGDQDGCANEANDIDSSGDH. Residues 257 to 271 are compositionally biased toward polar residues; that stretch reads NASTLQPRSNTQPTE.

It belongs to the ARR family. Type-B subfamily. Two-component system major event consists of a His-to-Asp phosphorelay between a sensor histidine kinase (HK) and a response regulator (RR). In plants, the His-to-Asp phosphorelay involves an additional intermediate named Histidine-containing phosphotransfer protein (HPt). This multistep phosphorelay consists of a His-Asp-His-Asp sequential transfer of a phosphate group between first a His and an Asp of the HK protein, followed by the transfer to a conserved His of the HPt protein and finally the transfer to an Asp in the receiver domain of the RR protein.

It localises to the cytoplasm. The protein localises to the cytosol. Its subcellular location is the nucleus. Transcriptional activator that binds specific DNA sequence. Functions as a response regulator involved in His-to-Asp phosphorelay signal transduction system. Phosphorylation of the Asp residue in the receiver domain activates the ability of the protein to promote the transcription of target genes. May directly activate some type-A response regulators in response to cytokinins. Functions as a response regulator in response to cytokinins. The polypeptide is Two-component response regulator ORR29 (Oryza sativa subsp. japonica (Rice)).